We begin with the raw amino-acid sequence, 155 residues long: Small ribosomal subunit protein uS7 (155 aa).

The protein belongs to the universal ribosomal protein uS7 family. As to quaternary structure, part of the 30S ribosomal subunit. Contacts proteins S9 and S11.

Functionally, one of the primary rRNA binding proteins, it binds directly to 16S rRNA where it nucleates assembly of the head domain of the 30S subunit. Is located at the subunit interface close to the decoding center, probably blocks exit of the E-site tRNA. In Sulfurovum sp. (strain NBC37-1), this protein is Small ribosomal subunit protein uS7.